Reading from the N-terminus, the 199-residue chain is 7-methyl-GTP pyrophosphatase (199 aa).

The active-site Proton acceptor is the Asp-76.

It belongs to the Maf family. YceF subfamily. The cofactor is a divalent metal cation.

The protein resides in the cytoplasm. It carries out the reaction N(7)-methyl-GTP + H2O = N(7)-methyl-GMP + diphosphate + H(+). Its function is as follows. Nucleoside triphosphate pyrophosphatase that hydrolyzes 7-methyl-GTP (m(7)GTP). May have a dual role in cell division arrest and in preventing the incorporation of modified nucleotides into cellular nucleic acids. The chain is 7-methyl-GTP pyrophosphatase from Nitrosococcus oceani (strain ATCC 19707 / BCRC 17464 / JCM 30415 / NCIMB 11848 / C-107).